A 501-amino-acid chain; its full sequence is Zinc finger protein PLAG1 (501 aa).

The tract at residues 1–30 (MATVIPGDLSEVRDTQKVPSGKRKRGETKP) is disordered. The Nuclear localization signal signature appears at 22 to 25 (KRKR). C2H2-type zinc fingers lie at residues 34-56 (FPCQ…SYSH), 62-86 (YKCT…MATH), 92-114 (HKCN…LHTH), 121-143 (FKCE…LALH), 150-172 (LTCK…LKTH), 185-207 (HQCE…MVVH), and 213-236 (FLCQ…KKSH). Composition is skewed to low complexity over residues 366–380 (SGMP…ASSS) and 455–467 (TQLP…PQDP). 2 disordered regions span residues 366–406 (SGMP…GSVP) and 447–474 (QEEA…IGLG).

The protein belongs to the krueppel C2H2-type zinc-finger protein family. In terms of tissue distribution, expressed in nephroblastoma.

It localises to the nucleus. Functionally, transcription factor and proto-oncogene whose activation results in up-regulation of target genes, such as IGFII, leading to uncontrolled cell proliferation. In Gallus gallus (Chicken), this protein is Zinc finger protein PLAG1 (PLAG1).